Here is a 350-residue protein sequence, read N- to C-terminus: FAD:protein FMN transferase (350 aa).

The signal sequence occupies residues 1 to 19 (MDMTFFRAALLGACVLLSG). A lipid anchor (N-palmitoyl cysteine) is attached at cysteine 20. A lipid anchor (S-diacylglycerol cysteine) is attached at cysteine 20. FAD is bound by residues methionine 41, tryptophan 78, 119–121 (AMD), and aspartate 181. Threonine 184 is a Mg(2+) binding site. Residues glutamate 187 and isoleucine 272 each coordinate FAD. Mg(2+)-binding residues include aspartate 298, aspartate 301, and threonine 302.

This sequence belongs to the ApbE family. Requires Mg(2+) as cofactor.

The protein resides in the cell inner membrane. It carries out the reaction L-threonyl-[protein] + FAD = FMN-L-threonyl-[protein] + AMP + H(+). Functionally, flavin transferase that catalyzes the transfer of the FMN moiety of FAD and its covalent binding to the hydroxyl group of a threonine residue in a target flavoprotein such as NqrB and NqrC, two subunits of the NQR complex. This chain is FAD:protein FMN transferase, found in Klebsiella pneumoniae (strain 342).